We begin with the raw amino-acid sequence, 439 residues long: GTPase Obg (439 aa).

In terms of domain architecture, Obg spans 3 to 162 (GEFYDSARIF…REIELELKLL (160 aa)). The region spanning 163-333 (ADVGLIGFPN…LLQRVAERLR (171 aa)) is the OBG-type G domain. GTP is bound by residues 169–176 (GFPNAGKS), 194–198 (FTTLQ), 215–218 (DIPG), 285–288 (NKAD), and 314–316 (SAA). 2 residues coordinate Mg(2+): Ser-176 and Thr-196. Residues 351–428 (VPEVDERLYT…IEQAAFDWED (78 aa)) enclose the OCT domain.

It belongs to the TRAFAC class OBG-HflX-like GTPase superfamily. OBG GTPase family. As to quaternary structure, monomer. It depends on Mg(2+) as a cofactor.

It is found in the cytoplasm. Functionally, an essential GTPase which binds GTP, GDP and possibly (p)ppGpp with moderate affinity, with high nucleotide exchange rates and a fairly low GTP hydrolysis rate. Plays a role in control of the cell cycle, stress response, ribosome biogenesis and in those bacteria that undergo differentiation, in morphogenesis control. The polypeptide is GTPase Obg (Roseiflexus castenholzii (strain DSM 13941 / HLO8)).